The chain runs to 252 residues: 3-dehydroquinate dehydratase (252 aa).

Residues Ser21, 46–48 (EWR), and Arg82 contribute to the 3-dehydroquinate site. His143 (proton donor/acceptor) is an active-site residue. The active-site Schiff-base intermediate with substrate is Lys170. Arg213, Ser232, and Gln236 together coordinate 3-dehydroquinate.

Belongs to the type-I 3-dehydroquinase family. In terms of assembly, homodimer.

It catalyses the reaction 3-dehydroquinate = 3-dehydroshikimate + H2O. It participates in metabolic intermediate biosynthesis; chorismate biosynthesis; chorismate from D-erythrose 4-phosphate and phosphoenolpyruvate: step 3/7. Its function is as follows. Involved in the third step of the chorismate pathway, which leads to the biosynthesis of aromatic amino acids. Catalyzes the cis-dehydration of 3-dehydroquinate (DHQ) and introduces the first double bond of the aromatic ring to yield 3-dehydroshikimate. The chain is 3-dehydroquinate dehydratase from Escherichia coli O157:H7.